We begin with the raw amino-acid sequence, 357 residues long: MRRTGPEEEACGVWLDAAALKRRKVQTHLIKPGTKMLTLLPGERKANIYFTQRRAPSTGIHQRSIASFFTLQPGKTNGSDQKSVSSHTESQINKESKKNATQLDHLIPGLAHDCMASPLATSTTADIQEAGLSPQSLQTSGHHRMKTPFSTELSLLQPDTPDCAGDSHTPLAFSFTEDLESSCLLDRKEEKGDSARKWEWLHESKKNYQSMEKHTKLPGDKCCQPLGKTKLERKVSAKENRQAPVLLQTYRESWNGENIESVKQSRSPVSVFSWDNEKNDKDSWSQLFTEDSQGQRVIAHNTRAPFQDVTNNWNWDLGPFPNSPWAQCQEDGPTQNLKPDLLFTQDSEGNQVIRHQF.

Polar residues predominate over residues 71-91 (LQPGKTNGSDQKSVSSHTESQ). The disordered stretch occupies residues 71–98 (LQPGKTNGSDQKSVSSHTESQINKESKK). Residues 187 to 357 (RKEEKGDSAR…EGNQVIRHQF (171 aa)) form an interaction with AURKA region. S267 and S292 each carry phosphoserine. Positions 281-357 (KDSWSQLFTE…EGNQVIRHQF (77 aa)) are interaction with RBBP8/CtIP.

Belongs to the AUNIP family. Interacts (via C-terminus) with AURKA (via C-terminus). Interacts (via N-terminus) with NIN; this interaction blocks NIN phosphorylation by both AURKA and GSK3B. Identified in a complex with NIN and AURKA. Interacts with RBBP8/CtIP. Expressed in heart, skeletal muscles, placenta and testis.

Its subcellular location is the nucleus. The protein localises to the chromosome. The protein resides in the cytoplasm. It is found in the cytoskeleton. It localises to the microtubule organizing center. Its subcellular location is the centrosome. The protein localises to the spindle pole. In terms of biological role, DNA-binding protein that accumulates at DNA double-strand breaks (DSBs) following DNA damage and promotes DNA resection and homologous recombination. Serves as a sensor of DNA damage: binds DNA with a strong preference for DNA substrates that mimic structures generated at stalled replication forks, and anchors RBBP8/CtIP to DSB sites to promote DNA end resection and ensuing homologous recombination repair. Inhibits non-homologous end joining (NHEJ). Required for the dynamic movement of AURKA at the centrosomes and spindle apparatus during the cell cycle. The chain is Aurora kinase A- and ninein-interacting protein from Homo sapiens (Human).